A 232-amino-acid polypeptide reads, in one-letter code: Probable fimbrial chaperone LpfB (232 aa).

Positions 1 to 24 (MDRMMKSKFVALALSLFLSQSVLA) are cleaved as a signal peptide.

This sequence belongs to the periplasmic pilus chaperone family.

The protein localises to the periplasm. Part of the lpfABCC'DE fimbrial operon. LP fimbriae may participate in the interaction with eukaryotic cells by assisting in microcolony formation. The chain is Probable fimbrial chaperone LpfB (lpfB) from Escherichia coli O157:H7.